Consider the following 404-residue polypeptide: uncharacterized protein (404 aa).

A run of 12 helical transmembrane segments spans residues 16 to 36 (FAFF…QPLM), 49 to 69 (AASL…LVFG), 79 to 99 (PIMG…AFSP), 110 to 130 (IQGV…GEEI), 133 to 153 (GSLG…AVFG), 166 to 186 (WHMA…IFFI), 221 to 241 (FLIG…IVYV), 252 to 272 (AFSS…SFIG), 283 to 303 (ILVM…NNML), 307 to 327 (ILGI…ASSW), 342 to 362 (LYLF…GLFW), and 364 to 384 (GFHW…ALWL).

Belongs to the major facilitator superfamily.

It localises to the cell membrane. This is an uncharacterized protein from Bacillus subtilis (strain 168).